Consider the following 195-residue polypeptide: UPF0314 protein RHE_CH03951 (195 aa).

Transmembrane regions (helical) follow at residues 14–34 (AFWF…EYLM), 64–84 (WYTP…YLIL), 128–148 (DSIL…FFAA), and 150–170 (APVA…GYVI).

Belongs to the UPF0314 family.

The protein resides in the cell membrane. In Rhizobium etli (strain ATCC 51251 / DSM 11541 / JCM 21823 / NBRC 15573 / CFN 42), this protein is UPF0314 protein RHE_CH03951.